The following is a 231-amino-acid chain: Protein N-terminal glutamine amidohydrolase (231 aa).

Residues 1 to 21 (MADDRVAGGATPPPPPPPPPL) form a disordered region. The segment covering 11 to 21 (TPPPPPPPPPL) has biased composition (pro residues). Active-site residues include C33, H89, and D108.

Belongs to the NTAQ1 family. In terms of assembly, monomer.

The catalysed reaction is N-terminal L-glutaminyl-[protein] + H2O = N-terminal L-glutamyl-[protein] + NH4(+). Functionally, mediates the side-chain deamidation of N-terminal glutamine residues to glutamate, an important step in N-end rule pathway of protein degradation. Conversion of the resulting N-terminal glutamine to glutamate renders the protein susceptible to arginylation, polyubiquitination and degradation as specified by the N-end rule. Does not act on substrates with internal or C-terminal glutamine and does not act on non-glutamine residues in any position. This is Protein N-terminal glutamine amidohydrolase from Oryza sativa subsp. indica (Rice).